We begin with the raw amino-acid sequence, 188 residues long: Elongation factor P (188 aa).

This sequence belongs to the elongation factor P family.

Its subcellular location is the cytoplasm. It participates in protein biosynthesis; polypeptide chain elongation. In terms of biological role, involved in peptide bond synthesis. Stimulates efficient translation and peptide-bond synthesis on native or reconstituted 70S ribosomes in vitro. Probably functions indirectly by altering the affinity of the ribosome for aminoacyl-tRNA, thus increasing their reactivity as acceptors for peptidyl transferase. The chain is Elongation factor P from Bradyrhizobium diazoefficiens (strain JCM 10833 / BCRC 13528 / IAM 13628 / NBRC 14792 / USDA 110).